A 378-amino-acid polypeptide reads, in one-letter code: D-alanine--D-alanine ligase (378 aa).

The 226-residue stretch at 149–374 (KVLLAAAGIP…YTDLITKLIE (226 aa)) folds into the ATP-grasp domain. Residue 189-247 (EAGLQYPLFVKPSRAGSSFGVTKVEHEGDAAELAAAVYEASRHDWRILVEQGIDAREIE) coordinates ATP. Residues Asp328, Glu341, and Asn343 each coordinate Mg(2+).

Belongs to the D-alanine--D-alanine ligase family. Mg(2+) serves as cofactor. The cofactor is Mn(2+).

The protein localises to the cytoplasm. The enzyme catalyses 2 D-alanine + ATP = D-alanyl-D-alanine + ADP + phosphate + H(+). It participates in cell wall biogenesis; peptidoglycan biosynthesis. In terms of biological role, cell wall formation. This Bifidobacterium adolescentis (strain ATCC 15703 / DSM 20083 / NCTC 11814 / E194a) protein is D-alanine--D-alanine ligase.